The primary structure comprises 324 residues: tRNA N6-adenosine threonylcarbamoyltransferase (324 aa).

His-107, His-111, and Tyr-128 together coordinate Fe cation. Residues 128-132, Asp-160, Gly-173, Glu-177, and Asn-256 contribute to the substrate site; that span reads YVSGG. Position 284 (Asp-284) interacts with Fe cation.

Belongs to the KAE1 / TsaD family. As to quaternary structure, monomer. Component of the KEOPS complex that consists of Kae1, Bud32, Cgi121 and Pcc1; the whole complex dimerizes. It depends on Fe(2+) as a cofactor.

Its subcellular location is the cytoplasm. The enzyme catalyses L-threonylcarbamoyladenylate + adenosine(37) in tRNA = N(6)-L-threonylcarbamoyladenosine(37) in tRNA + AMP + H(+). In terms of biological role, required for the formation of a threonylcarbamoyl group on adenosine at position 37 (t(6)A37) in tRNAs that read codons beginning with adenine. Is a component of the KEOPS complex that is probably involved in the transfer of the threonylcarbamoyl moiety of threonylcarbamoyl-AMP (TC-AMP) to the N6 group of A37. Kae1 likely plays a direct catalytic role in this reaction, but requires other protein(s) of the complex to fulfill this activity. The polypeptide is tRNA N6-adenosine threonylcarbamoyltransferase (Methanothrix thermoacetophila (strain DSM 6194 / JCM 14653 / NBRC 101360 / PT) (Methanosaeta thermophila)).